The following is an 887-amino-acid chain: Leucine--tRNA ligase (887 aa).

The 'HIGH' region signature appears at 48 to 58; it reads PYPSGKLHMGH. The short motif at 644–648 is the 'KMSKS' region element; that stretch reads TMSKS. Lysine 647 is an ATP binding site.

The protein belongs to the class-I aminoacyl-tRNA synthetase family.

Its subcellular location is the cytoplasm. It catalyses the reaction tRNA(Leu) + L-leucine + ATP = L-leucyl-tRNA(Leu) + AMP + diphosphate. In Leptothrix cholodnii (strain ATCC 51168 / LMG 8142 / SP-6) (Leptothrix discophora (strain SP-6)), this protein is Leucine--tRNA ligase.